The chain runs to 398 residues: S-adenosylmethionine synthase 2 (398 aa).

Position 16 (His-16) interacts with ATP. Asp-18 serves as a coordination point for Mg(2+). K(+) is bound at residue Glu-51. Residues Glu-64 and Gln-108 each contribute to the L-methionine site. The tract at residues 108–118 (QSADIAQGVDA) is flexible loop. ATP is bound by residues 176-178 (DSK), 242-243 (KF), Asp-251, 257-258 (RK), Ala-274, and Lys-278. Asp-251 lines the L-methionine pocket. An L-methionine-binding site is contributed by Lys-282.

Belongs to the AdoMet synthase family. Homotetramer; dimer of dimers. The cofactor is Mg(2+). K(+) serves as cofactor.

The protein localises to the cytoplasm. It catalyses the reaction L-methionine + ATP + H2O = S-adenosyl-L-methionine + phosphate + diphosphate. The protein operates within amino-acid biosynthesis; S-adenosyl-L-methionine biosynthesis; S-adenosyl-L-methionine from L-methionine: step 1/1. In terms of biological role, catalyzes the formation of S-adenosylmethionine (AdoMet) from methionine and ATP. The overall synthetic reaction is composed of two sequential steps, AdoMet formation and the subsequent tripolyphosphate hydrolysis which occurs prior to release of AdoMet from the enzyme. This Rhodopseudomonas palustris (strain BisB18) protein is S-adenosylmethionine synthase 2.